The sequence spans 448 residues: Histidine--tRNA ligase (448 aa).

Disordered regions lie at residues 1 to 20 (MAIK…SPKL) and 428 to 448 (AGQA…QEKA).

Belongs to the class-II aminoacyl-tRNA synthetase family. In terms of assembly, homodimer.

It localises to the cytoplasm. It carries out the reaction tRNA(His) + L-histidine + ATP = L-histidyl-tRNA(His) + AMP + diphosphate + H(+). This Deinococcus deserti (strain DSM 17065 / CIP 109153 / LMG 22923 / VCD115) protein is Histidine--tRNA ligase.